We begin with the raw amino-acid sequence, 589 residues long: MSSHKESSEYEMQYRSTIQPRTAVRSQSRQSGNYVSGGNGAGSGGRVLKMVTEMGSATVGGISPALSANAAKSFLEATDKEKKTLQGLNDRLGNYIDRVKKLEEQNRKLVADLDELRGKWGKDTSEIKIKYSESLSTARKDIDDAARRKAEVDVKVARHRDDLAEYRSRYEDIQQRRESDREKISQWTNAIADAQSEVEMLRARFKQLTDEEKRVTADNSRIWEELQKARSDLDDETIGRIDFQNQVQTLMEELEFLRRVHEQEVKELQALLAQAPADTREFFKNELALAIRDIKDEYDIIAKQGKQDMESWYKLKVSEVQGSANRANMESTYQRDEVKRMRDNIGDLRGKLGDLENKNSLLEKEVQNLNYQLTDDQRQYEAALNDRDATLRRMREECQTLVAELQALLDTKQMLDAEIAIYRKMLEGEETRVGLTQMVEQAVKTHSLQQQENTDSTRSVRGEVSTKTTFQRSAKGNVTISECDPNGKFIKLENSHRNKDENVGEHKIRRKLDGRREIVYSIPANVVIKPGKNLTIYARDQGGINNPPESLVFDGENTWGIGANVVTSLVNKDGEERATHTQKTIQSGQ.

A disordered region spans residues 1-42; the sequence is MSSHKESSEYEMQYRSTIQPRTAVRSQSRQSGNYVSGGNGAG. Residues 8–84 are head; the sequence is SEYEMQYRST…LEATDKEKKT (77 aa). Polar residues predominate over residues 14–30; that stretch reads YRSTIQPRTAVRSQSRQ. An IF rod domain is found at 81-433; it reads EKKTLQGLND…KMLEGEETRV (353 aa). A coil 1A region spans residues 85-116; the sequence is LQGLNDRLGNYIDRVKKLEEQNRKLVADLDEL. The interval 117–130 is linker 1; sequence RGKWGKDTSEIKIK. Residues 131–268 are coil 1B; that stretch reads YSESLSTARK…RVHEQEVKEL (138 aa). Residues 269 to 285 are linker 12; that stretch reads QALLAQAPADTREFFKN. Residues 286-433 are coil 2; that stretch reads ELALAIRDIK…KMLEGEETRV (148 aa). The interval 434–588 is tail; sequence GLTQMVEQAV…THTQKTIQSG (155 aa). Residues 444–470 form a disordered region; sequence KTHSLQQQENTDSTRSVRGEVSTKTTF. The LTD domain occupies 466 to 584; sequence TKTTFQRSAK…EERATHTQKT (119 aa).

It belongs to the intermediate filament family. In terms of assembly, forms some heteromeric filaments with ifa-1, ifa-2, ifa-3 and probably ifa-4. Expressed in epidermal cells. Expressed in amphid sensory neurons, the excretory cells, the vulva, the uterus, the rectum and some neurons of the tail. Isoform a and isoform b display a similar pattern of expression. Isoform a is predominant in pharyngeal tonofilaments.

The protein resides in the cytoplasm. In terms of biological role, cytoplasmic intermediate filaments provide mechanical strength to cells. Essential protein, involved in attachment structures in epidermal cells that connect muscles to the external cuticle. Required in morphogenesis and epidermal integrity. Probable component of embryonic epidermal attachment structures. Functions in larval muscle attachment independently of ifa-2. The polypeptide is Intermediate filament protein ifb-1 (ifb-1) (Caenorhabditis elegans).